The sequence spans 494 residues: MAWLGIGMGRQIVPVLVFVAVLCSGVDASFNRYSFPKDFIFGTGSAAYQYEGAAKEGGKILNGDTGDVADDFYHRYKEDVNLLKDMNMDAFRFSISWSRILPNGTLSGGVNKEGVAFYNNLINEIIAKGMKPFVTIFHWDTPQALESKYGGFLSENIIKDYVDFAEVCFREFGDRVKFWATFNEPWTYCSQGYGTGIHALGRCSPYVSTSCAGGDSSREPYLAAHHVILAHATAVHLYRTKYQPTQHGQIGITAVSHWFVPYNDTAADRRVVQRSLDFMYGWFLDPIVHGDYPGTMRGWLGARLPAFTAEQAAAVRGSYDFIGVNYYTTYYAKSVPLPSSNRLSYDTDIRANTTGFRNGKPIGPQEFTPIFFNYPPGLRELLLYTKRRYNNPIIYVTENGIAEGNNKSLPITEALKDGHRIEFHSKHLQFVNHAIKNGVNVKGYFTWTFMDCFEWGDGYLDRFGLIYIDRLNNLKRYHKQSSYWIANFLKRKKY.

The first 28 residues, 1-28, serve as a signal peptide directing secretion; the sequence is MAWLGIGMGRQIVPVLVFVAVLCSGVDA. Gln-49 contacts a beta-D-glucoside. N-linked (GlcNAc...) asparagine glycosylation is present at Asn-103. Residues His-138 and 183–184 contribute to the a beta-D-glucoside site; that span reads NE. Glu-184 acts as the Proton donor in catalysis. A disulfide bridge links Cys-203 with Cys-211. The N-linked (GlcNAc...) asparagine glycan is linked to Asn-263. Residue Tyr-327 participates in a beta-D-glucoside binding. An N-linked (GlcNAc...) asparagine glycan is attached at Asn-352. Glu-398 serves as a coordination point for a beta-D-glucoside. Catalysis depends on Glu-398, which acts as the Nucleophile. An N-linked (GlcNAc...) asparagine glycan is attached at Asn-406. A beta-D-glucoside contacts are provided by residues Trp-447, 454–455, and Phe-463; that span reads EW.

This sequence belongs to the glycosyl hydrolase 1 family.

The catalysed reaction is Hydrolysis of terminal, non-reducing beta-D-glucosyl residues with release of beta-D-glucose.. This chain is Beta-glucosidase 29 (BGLU29), found in Oryza sativa subsp. japonica (Rice).